The sequence spans 634 residues: MKFMKIGSKLDSFKTDGNNVRYVENELASDISVDVEGSRFCLHKFPLLSKCACLQKLLSSTDKNNIDDIDISGIPGGPTAFETCAKFCYGMTVTLSAYNVVATRCAAEYLGMHETVEKGNLIYKIDVFLSSSLFRSWKDSIIVLQTTKPFLPLSEDLKLVSLCIDAIATKACVDVSHVEWSYTYNKKKLAEENNGADSIKARDVPHDWWVEDLCELEIDYYKRVIMNIKTKCILGGEVIGEALKAYGYRRLSGFNKGVMEQGDLVKHKTIIETLVWLLPAEKNSVSCGFLLKLLKAVTMVNSGEVVKEQLVRRIGQQLEEASMAELLIKSHQGSETLYDVDLVQKIVMEFMRRDKNSEIEVQDDEDGFEVQEVRKLPGILSEASKLMVAKVIDSYLTEIAKDPNLPASKFIDVAESVTSIPRPAHDALYRAIDMFLKEHPGITKGEKKRMCKLMDCRKLSVEACMHAVQNDRLPLRVVVQVLFFEQVRAAASSGSSTPDLPRGMGRELRSCGTYGSSRSVPTVMEDEWEAVATEEEMRALKSEIAALKLQEESGRKSMDRAGVTAISKIRSLIMSKKIFGKKVQLQSKGGGEKNNGGGGGGSDSSESLGSMNAAEETAKTATPSRNLTRRVSVS.

The region spanning 29–97 (SDISVDVEGS…CYGMTVTLSA (69 aa)) is the BTB domain. Positions 207–488 (DWWVEDLCEL…VQVLFFEQVR (282 aa)) constitute an NPH3 domain. Position 429 is a phosphotyrosine (Tyr429). Disordered stretches follow at residues 492–517 (SSGS…YGSS) and 584–634 (QLQS…VSVS). Over residues 588-602 (KGGGEKNNGGGGGGS) the composition is skewed to gly residues. Over residues 619–634 (KTATPSRNLTRRVSVS) the composition is skewed to polar residues.

Belongs to the NPH3 family. As to expression, specifically expressed in the hypophysis and the root meristems in the embryos. Highly expressed in primary root tips and radicles.

It is found in the cell membrane. The protein localises to the cytoplasm. Its subcellular location is the cytosol. It participates in protein modification; protein ubiquitination. Functionally, may act as a substrate-specific adapter of an E3 ubiquitin-protein ligase complex (CUL3-RBX1-BTB) which mediates the ubiquitination and subsequent proteasomal degradation of target proteins. Plays an essential role in auxin-mediated organogenesis and in root gravitropic responses through the control of PIN proteins (e.g. PIN1 and PIN2) polarity in the root tip endodermal cell layer and in shoot epidermis. Recruited to the plasma membrane by PINs (e.g. PIN1 and PIN2) and, in concert with AGC kinases-mediated (e.g. D6PK and PID) PINs phosphorylation, maintains their polarity through limiting lateral diffusion-based escape. This Arabidopsis thaliana (Mouse-ear cress) protein is Phototropic-responsive NPH3 family protein NPY2.